A 1428-amino-acid chain; its full sequence is DNA topoisomerase 2 (1428 aa).

ATP-binding positions include Asn70, Asn99, 127–129 (SSN), and 140–147 (GRNGYGAK). Residues 333-336 (KKKK) are interaction with DNA. 365 to 367 (QTK) serves as a coordination point for ATP. The region spanning 443-557 (CTLVLTEGDS…GLLDIQGFLL (115 aa)) is the Toprim domain. Mg(2+) contacts are provided by Glu449, Asp526, and Asp528. The Topo IIA-type catalytic domain occupies 692 to 1159 (IPNVLDGFKP…SAKDIWNTDL (468 aa)). Tyr782 acts as the O-(5'-phospho-DNA)-tyrosine intermediate in catalysis. An interaction with DNA region spans residues 965-974 (KLISPISLMN). Disordered stretches follow at residues 1083 to 1102 (KGATSDEEDEESSHEDTENV), 1176 to 1217 (ARGG…RKGK), 1240 to 1288 (KAPT…ELSK), and 1303 to 1428 (MGST…NEED). Thr1086 carries the phosphothreonine; by CK2 modification. Ser1087 carries the post-translational modification Phosphoserine; by CK2. Residues 1207–1217 (KNKKSTARKGK) show a composition bias toward basic residues. The residue at position 1252 (Ser1252) is a Phosphoserine. Position 1258 is a phosphothreonine; by CK2 (Thr1258). A phosphoserine; by CK2 mark is found at Ser1266, Ser1269, and Ser1272. Residues 1275–1286 (DIKKEDKDEGEL) are compositionally biased toward basic and acidic residues. The segment covering 1332-1347 (TAVKPKLAKKPVRKQQ) has biased composition (basic residues). A phosphoserine; by CK2 mark is found at Ser1353, Ser1356, Ser1408, and Ser1423. Positions 1403–1428 (ELSDDSFIEDDEEENQGSDVSFNEED) are enriched in acidic residues.

Belongs to the type II topoisomerase family. Homodimer. Mg(2+) is required as a cofactor. Mn(2+) serves as cofactor. Requires Ca(2+) as cofactor. Post-translationally, phosphorylation enhances the activity. Stimulates decatenation activity.

Its subcellular location is the nucleus. The catalysed reaction is ATP-dependent breakage, passage and rejoining of double-stranded DNA.. In terms of biological role, control of topological states of DNA by transient breakage and subsequent rejoining of DNA strands. Topoisomerase II makes double-strand breaks. Essential during mitosis and meiosis for proper segregation of daughter chromosomes. The protein is DNA topoisomerase 2 (TOP2) of Saccharomyces cerevisiae (strain ATCC 204508 / S288c) (Baker's yeast).